The primary structure comprises 267 residues: Phosphonoacetaldehyde hydrolase (267 aa).

Residue Asp10 is the Nucleophile of the active site. 2 residues coordinate Mg(2+): Asp10 and Ala12. The active-site Schiff-base intermediate with substrate is the Lys51. Asp184 serves as a coordination point for Mg(2+).

This sequence belongs to the HAD-like hydrolase superfamily. PhnX family. As to quaternary structure, homodimer. Mg(2+) is required as a cofactor.

It carries out the reaction phosphonoacetaldehyde + H2O = acetaldehyde + phosphate + H(+). Involved in phosphonate degradation. The chain is Phosphonoacetaldehyde hydrolase from Paraburkholderia phytofirmans (strain DSM 17436 / LMG 22146 / PsJN) (Burkholderia phytofirmans).